Consider the following 1843-residue polypeptide: COPII coat assembly protein sec16 (1843 aa).

Disordered regions lie at residues methionine 1–phenylalanine 220, phenylalanine 269–threonine 324, asparagine 339–alanine 769, proline 807–proline 872, serine 1385–glutamate 1691, and asparagine 1706–lysine 1843. Composition is skewed to polar residues over residues aspartate 29–glutamate 40, histidine 58–alanine 76, and valine 92–glutamine 108. Over residues proline 165–asparagine 177 the composition is skewed to basic and acidic residues. A compositionally biased stretch (polar residues) spans phenylalanine 183 to phenylalanine 198. Residues serine 309 to serine 323 are compositionally biased toward low complexity. The segment covering glutamine 362–alanine 372 has biased composition (basic and acidic residues). Acidic residues predominate over residues leucine 379–aspartate 389. The segment covering asparagine 396 to leucine 448 has biased composition (polar residues). Residues lysine 479 to tyrosine 492 are compositionally biased toward basic and acidic residues. Residues serine 521–serine 549 are compositionally biased toward pro residues. Residues glycine 579 to threonine 589 show a composition bias toward polar residues. Residues histidine 594 to glutamine 614 show a composition bias toward pro residues. The span at aspartate 615–glutamine 627 shows a compositional bias: polar residues. The segment covering glycine 644–serine 656 has biased composition (low complexity). The segment covering proline 657 to proline 687 has biased composition (pro residues). 2 stretches are compositionally biased toward polar residues: residues tyrosine 691–glycine 702 and arginine 749–isoleucine 759. Low complexity-rich tracts occupy residues threonine 760–alanine 769 and proline 826–proline 842. Polar residues-rich tracts occupy residues proline 863–proline 872, glycine 1408–valine 1418, and glutamine 1441–glutamate 1453. Residues glycine 1457–serine 1468 show a composition bias toward low complexity. Residues glutamine 1480–tyrosine 1491 are compositionally biased toward polar residues. The span at lysine 1631–arginine 1655 shows a compositional bias: basic and acidic residues. Composition is skewed to low complexity over residues serine 1726–serine 1742 and proline 1751–serine 1764. Composition is skewed to pro residues over residues proline 1765–methionine 1776 and proline 1790–proline 1804.

This sequence belongs to the SEC16 family.

The protein resides in the endoplasmic reticulum membrane. Involved in the initiation of assembly of the COPII coat required for the formation of transport vesicles from the endoplasmic reticulum (ER) and the selection of cargo molecules. Also involved in autophagy. The sequence is that of COPII coat assembly protein sec16 (sec16) from Aspergillus oryzae (strain ATCC 42149 / RIB 40) (Yellow koji mold).